A 186-amino-acid chain; its full sequence is dCTP deaminase (186 aa).

107-112 is a binding site for dCTP; sequence KSTYAR. Glutamate 133 (proton donor/acceptor) is an active-site residue. The dCTP site is built by glutamine 152, tyrosine 166, and glutamine 176.

The protein belongs to the dCTP deaminase family. Homotrimer.

The enzyme catalyses dCTP + H2O + H(+) = dUTP + NH4(+). It functions in the pathway pyrimidine metabolism; dUMP biosynthesis; dUMP from dCTP (dUTP route): step 1/2. Functionally, catalyzes the deamination of dCTP to dUTP. In Campylobacter jejuni subsp. jejuni serotype O:6 (strain 81116 / NCTC 11828), this protein is dCTP deaminase.